The chain runs to 436 residues: T-box transcription factor T (436 aa).

The T-box DNA-binding region spans 51–219; the sequence is LWLRFKELTN…YNPFAKAFLD (169 aa).

Monomer. Binds DNA as a monomer.

Its subcellular location is the nucleus. In terms of biological role, involved in the transcriptional regulation of genes required for mesoderm formation and differentiation. Binds to a palindromic T site 5'-TTCACACCTAGGTGTGAA-3' DNA sequence and activates gene transcription when bound to such a site. The chain is T-box transcription factor T from Mus musculus (Mouse).